A 118-amino-acid polypeptide reads, in one-letter code: NADPH-dependent 7-cyano-7-deazaguanine reductase (118 aa).

Catalysis depends on Cys-31, which acts as the Thioimide intermediate. The active-site Proton donor is the Asp-38. Substrate-binding positions include 53 to 55 (VEL) and 72 to 73 (YE).

The protein belongs to the GTP cyclohydrolase I family. QueF type 1 subfamily.

The protein resides in the cytoplasm. The enzyme catalyses 7-aminomethyl-7-carbaguanine + 2 NADP(+) = 7-cyano-7-deazaguanine + 2 NADPH + 3 H(+). It functions in the pathway tRNA modification; tRNA-queuosine biosynthesis. Its function is as follows. Catalyzes the NADPH-dependent reduction of 7-cyano-7-deazaguanine (preQ0) to 7-aminomethyl-7-deazaguanine (preQ1). This chain is NADPH-dependent 7-cyano-7-deazaguanine reductase, found in Chlorobium phaeobacteroides (strain BS1).